The following is a 424-amino-acid chain: Hemagglutinin-esterase (424 aa).

2 consecutive signal peptides follow at residues 1–16 (MFLL…IIGS) and 1–18 (MFLL…GSLG). Residues 7-127 (FVLVSCIIGS…SNDIWMQNKG (121 aa)) are esterase domain 1. Residues 17 to 392 (LGFDNPPTNV…PICVYDPLPL (376 aa)) lie on the Virion surface side of the membrane. Ser40 acts as the Nucleophile in catalysis. Cysteines 44 and 65 form a disulfide. Asn54, Asn89, Asn153, Asn236, and Asn301 each carry an N-linked (GlcNAc...) asparagine; by host glycan. Disulfide bonds link Cys113/Cys162, Cys197/Cys276, and Cys205/Cys249. Residues 128–266 (LFYTQVYKNM…GNYLAISNEL (139 aa)) form a receptor binding region. The segment at 267-379 (LLTVPTKAIC…RCPTAADINT (113 aa)) is esterase domain 2. Cys307 and Cys312 are oxidised to a cystine. N-linked (GlcNAc...) asparagine; by host glycosylation is present at Asn316. Active-site charge relay system residues include Asp326 and His329. Residues Cys347 and Cys371 are joined by a disulfide bond. A glycan (N-linked (GlcNAc...) asparagine; by host) is linked at Asn358. The chain crosses the membrane as a helical span at residues 393–413 (ILLGILLGVAVIIIVVLLLYF). The Intravirion segment spans residues 414–424 (MVDNGTRLHDA). Residue Asn417 is glycosylated (N-linked (GlcNAc...) asparagine; by host).

This sequence belongs to the influenza type C/coronaviruses hemagglutinin-esterase family. Homodimer; disulfide-linked. Forms a complex with the M protein in the pre-Golgi. Associates then with S-M complex to form a ternary complex S-M-HE. In terms of processing, N-glycosylated in the host RER.

The protein resides in the virion membrane. It localises to the host cell membrane. It catalyses the reaction N-acetyl-9-O-acetylneuraminate + H2O = N-acetylneuraminate + acetate + H(+). It carries out the reaction N-acetyl-4-O-acetylneuraminate + H2O = N-acetylneuraminate + acetate + H(+). In terms of biological role, structural protein that makes short spikes at the surface of the virus. Contains receptor binding and receptor-destroying activities. Mediates de-O-acetylation of N-acetyl-4-O-acetylneuraminic acid, which is probably the receptor determinant recognized by the virus on the surface of erythrocytes and susceptible cells. This receptor-destroying activity is important for virus release as it probably helps preventing self-aggregation and ensures the efficient spread of the progeny virus from cell to cell. May serve as a secondary viral attachment protein for initiating infection, the spike protein being the major one. May become a target for both the humoral and the cellular branches of the immune system. The sequence is that of Hemagglutinin-esterase from Bos taurus (Bovine).